A 919-amino-acid polypeptide reads, in one-letter code: Tight junction protein ZO-3 (919 aa).

In terms of domain architecture, PDZ 1 spans 11 to 93; that stretch reads TATLSKDPRR…MANITVKRPR (83 aa). The segment at 92–173 is disordered; the sequence is PRRIHLPATK…SPGGGSEANG (82 aa). The residue at position 112 (Ser-112) is a Phosphoserine. Positions 117–131 are enriched in basic and acidic residues; it reads GPQRVEEVDQGRGYD. At Ser-136 the chain carries Phosphoserine. The span at 147–163 shows a compositional bias: basic residues; it reads RRPRPGRRGRAGSHGRR. Residues Ser-164, Ser-169, Ser-203, and Ser-319 each carry the phosphoserine modification. In terms of domain architecture, PDZ 2 spans 195-272; sequence SVLVKRRDSE…KLSLLVLRDR (78 aa). A disordered region spans residues 279–377; the sequence is IPPAVSDSDS…SSQSMEDRGY (99 aa). Position 325 is a phosphothreonine (Thr-325). Phosphoserine is present on Ser-327. A compositionally biased stretch (basic and acidic residues) spans 332-360; sequence PRLRRESSVDSRTISEPDEQRSELPRESS. A Phosphoserine modification is found at Ser-371. One can recognise a PDZ 3 domain in the interval 380–446; sequence DTRVVRFLKG…LTREEAVQFL (67 aa). The SH3 domain maps to 475–549; that stretch reads GDSFYIRTHF…PNQSRAEQLA (75 aa). A Guanylate kinase-like domain is found at 580 to 761; sequence LRRGAKKTTQ…WYQELKAIIR (182 aa). Ser-591 is modified (phosphoserine). The span at 791–801 shows a compositional bias: low complexity; the sequence is ADSSADLSCDS. 2 disordered regions span residues 791-886 and 899-919; these read ADSS…DSMR and RVHD…ATDL. The segment covering 812–828 has biased composition (gly residues); it reads EGGAYTDGEGYTDGEGG. Ser-856, Ser-905, and Ser-906 each carry phosphoserine.

This sequence belongs to the MAGUK family. As to quaternary structure, interacts with occludin OCLN, claudins and TPJ1. Interacts with PATJ. Interacts with UBN1. Interacts with FASLG. Interacts with CCND1. Post-translationally, phosphorylated.

It is found in the cell membrane. The protein resides in the cell junction. Its subcellular location is the tight junction. The protein localises to the nucleus. Its function is as follows. TJP1, TJP2, and TJP3 are closely related scaffolding proteins that link tight junction (TJ) transmembrane proteins such as claudins, junctional adhesion molecules, and occludin to the actin cytoskeleton. The tight junction acts to limit movement of substances through the paracellular space and as a boundary between the compositionally distinct apical and basolateral plasma membrane domains of epithelial and endothelial cells. Binds and recruits PATJ to tight junctions where it connects and stabilizes apical and lateral components of tight junctions. Promotes cell-cycle progression through the sequestration of cyclin D1 (CCND1) at tight junctions during mitosis which prevents CCND1 degradation during M-phase and enables S-phase transition. With TJP1 and TJP2, participates in the junctional retention and stability of the transcription factor DBPA, but is not involved in its shuttling to the nucleus. Contrary to TJP2, TJP3 is dispensable for individual viability, embryonic development, epithelial differentiation, and the establishment of TJs, at least in the laboratory environment. The sequence is that of Tight junction protein ZO-3 (TJP3) from Homo sapiens (Human).